Consider the following 629-residue polypeptide: Ionotropic receptor 75a (629 aa).

The Extracellular portion of the chain corresponds to 1-335 (MQLVQLANFV…GDVFLQPFSP (335 aa)). 6 N-linked (GlcNAc...) asparagine glycosylation sites follow: Asn61, Asn112, Asn126, Asn144, Asn166, and Asn232. The helical transmembrane segment at 336–356 (LVWYLFGGVLSLIGVLLWITF) threads the bilayer. Topologically, residues 357-374 (YMECKRMQKRWRLDYLPS) are cytoplasmic. The helical transmembrane segment at 375–395 (LLSTFLISFGAACIQSSSLIP) threads the bilayer. Topologically, residues 396-402 (RSAGGRL) are extracellular. Residues 403 to 423 (IYFALFLISFIMYNYYTSVVV) form a helical membrane-spanning segment. Residues 424 to 592 (SSLLSSPVKS…NFVITVGMEY (169 aa)) lie on the Cytoplasmic side of the membrane. Residues 593-613 (VAPLLLMLICADILVVVILLV) form a helical membrane-spanning segment. Over 614–629 (ELAWKRFFTRPLTIHP) the chain is Extracellular.

The protein belongs to the glutamate-gated ion channel (TC 1.A.10.1) family. As to expression, expressed in neurons in the antennal coeloconic 2 (ac2) sensillum class of sensory hairs (at protein level).

It localises to the cell membrane. The protein resides in the cell projection. It is found in the dendrite. In terms of biological role, olfactory receptor for propionic, butyric and 2-oxopentanoic acids. This chain is Ionotropic receptor 75a, found in Drosophila sechellia (Fruit fly).